The primary structure comprises 492 residues: Cytochrome P450 2A2 (492 aa).

Residue C437 coordinates heme.

It belongs to the cytochrome P450 family. The cofactor is heme. Liver specific.

It is found in the endoplasmic reticulum membrane. The protein localises to the microsome membrane. The catalysed reaction is an organic molecule + reduced [NADPH--hemoprotein reductase] + O2 = an alcohol + oxidized [NADPH--hemoprotein reductase] + H2O + H(+). Functionally, highly active in the 15-alpha-hydroxylation of testosterone. In Rattus norvegicus (Rat), this protein is Cytochrome P450 2A2 (Cyp2a2).